The sequence spans 1025 residues: Multidrug resistance protein MdtC (1025 aa).

12 helical membrane passes run 3 to 23 (FFALFIYRPVATILLSVAITL), 333 to 353 (EVEQTLIISVALVILVVFLFL), 360 to 380 (IIPAVAVPVSLIGTFAAMYLC), 387 to 407 (LSLMALTIATGFVVDDAIVVL), 431 to 451 (VGFTVLSMSLSLVAVFLPLLL), 463 to 483 (FAVTLSVAIGISLLVSLTLTP), 528 to 548 (LVGVVLLGTIALNIWLYISIP), 853 to 873 (VILIIAAIATVYIVLGILYES), 875 to 895 (VHPLTILSTLPSAGVGALLAL), 897 to 917 (LFNAPFSLIALIGIMLLIGIV), 953 to 973 (PIMMTTLAALFGALPLVLSGG), and 984 to 1004 (ITIVGGLVMSQLLTLYTTPVV).

It belongs to the resistance-nodulation-cell division (RND) (TC 2.A.6) family. MdtC subfamily. As to quaternary structure, part of a tripartite efflux system composed of MdtA, MdtB and MdtC. MdtC forms a heteromultimer with MdtB.

The protein resides in the cell inner membrane. Its function is as follows. The MdtABC tripartite complex confers resistance against novobiocin and deoxycholate. The chain is Multidrug resistance protein MdtC from Escherichia coli (strain 55989 / EAEC).